Consider the following 78-residue polypeptide: MKSSIHPEYKKFLIKVGSDVFETMSTHPTGEILMDVDFRKHPAWNKDSGNVVNQSNKSVSDFNKRFSGLSFGSKKEAS.

The protein belongs to the bacterial ribosomal protein bL31 family. Type A subfamily. In terms of assembly, part of the 50S ribosomal subunit.

Binds the 23S rRNA. This Rickettsia conorii (strain ATCC VR-613 / Malish 7) protein is Large ribosomal subunit protein bL31 (rpmE).